Here is a 147-residue protein sequence, read N- to C-terminus: Nucleoside diphosphate kinase (147 aa).

Residues lysine 9, phenylalanine 57, arginine 85, threonine 91, arginine 102, and asparagine 112 each coordinate ATP. Histidine 115 functions as the Pros-phosphohistidine intermediate in the catalytic mechanism.

This sequence belongs to the NDK family. As to quaternary structure, homotetramer. Requires Mg(2+) as cofactor.

It is found in the cytoplasm. The enzyme catalyses a 2'-deoxyribonucleoside 5'-diphosphate + ATP = a 2'-deoxyribonucleoside 5'-triphosphate + ADP. The catalysed reaction is a ribonucleoside 5'-diphosphate + ATP = a ribonucleoside 5'-triphosphate + ADP. In terms of biological role, major role in the synthesis of nucleoside triphosphates other than ATP. The ATP gamma phosphate is transferred to the NDP beta phosphate via a ping-pong mechanism, using a phosphorylated active-site intermediate. This is Nucleoside diphosphate kinase from Listeria monocytogenes serotype 4b (strain CLIP80459).